A 164-amino-acid chain; its full sequence is Transcription elongation factor GreA (164 aa).

Residues 50–76 adopt a coiled-coil conformation; the sequence is YHAAREEQGQQEARIRQLQELLNNAKV.

It belongs to the GreA/GreB family.

Functionally, necessary for efficient RNA polymerase transcription elongation past template-encoded arresting sites. The arresting sites in DNA have the property of trapping a certain fraction of elongating RNA polymerases that pass through, resulting in locked ternary complexes. Cleavage of the nascent transcript by cleavage factors such as GreA or GreB allows the resumption of elongation from the new 3'terminus. GreA releases sequences of 2 to 3 nucleotides. This is Transcription elongation factor GreA from Mycobacteroides abscessus (strain ATCC 19977 / DSM 44196 / CCUG 20993 / CIP 104536 / JCM 13569 / NCTC 13031 / TMC 1543 / L948) (Mycobacterium abscessus).